The sequence spans 79 residues: Small ribosomal subunit protein bS21 (79 aa).

The interval 59–79 (RKKMQREGLLPMKPKPVVGVR) is disordered.

Belongs to the bacterial ribosomal protein bS21 family.

The protein is Small ribosomal subunit protein bS21 of Methylocella silvestris (strain DSM 15510 / CIP 108128 / LMG 27833 / NCIMB 13906 / BL2).